Reading from the N-terminus, the 101-residue chain is Large ribosomal subunit protein uL23 (101 aa).

The protein belongs to the universal ribosomal protein uL23 family. Part of the 50S ribosomal subunit. Contacts protein L29, and trigger factor when it is bound to the ribosome.

Functionally, one of the early assembly proteins it binds 23S rRNA. One of the proteins that surrounds the polypeptide exit tunnel on the outside of the ribosome. Forms the main docking site for trigger factor binding to the ribosome. The polypeptide is Large ribosomal subunit protein uL23 (Trichodesmium erythraeum (strain IMS101)).